The chain runs to 401 residues: Ascaroside receptor GPR3 (401 aa).

Residues 1-16 (MQPFGDAWSQRHLAGV) lie on the Extracellular side of the membrane. A helical membrane pass occupies residues 17-37 (VLAGSVLSIVGSLYMILGFFF). Topologically, residues 38–47 (LRECRSFRHK) are cytoplasmic. Residues 48–68 (LILGLAVSDLLLALNFFIPSL) form a helical membrane-spanning segment. The Extracellular portion of the chain corresponds to 69-93 (SMVTGREISSPWNEGFCSANGFLMQ). A disulfide bridge links cysteine 85 with cysteine 159. A helical transmembrane segment spans residues 94–114 (LFFAQIDVWQISIALITLLML). The Cytoplasmic portion of the chain corresponds to 115–128 (SGPSMVLKWIRENV). A helical membrane pass occupies residues 129–149 (WAVWLFPWLVSLIAAFFAFGF). The Extracellular portion of the chain corresponds to 150 to 175 (WDYANVGGFCWLGSRNIRLYFNYIPR). Residues 176–196 (WIIILVCLVIYIAVYRLILHA) form a helical membrane-spanning segment. Topologically, residues 197 to 294 (RRRANIQKTY…QKQVRKIAIQ (98 aa)) are cytoplasmic. The segment at 206–259 (YRGRASDRAPPQPVTTTAPATNPESEKVNPDEISSGNGSSSLDTSRSGSSTGFT) is disordered. A compositionally biased stretch (low complexity) spans 239–257 (SSGNGSSSLDTSRSGSSTG). Residues 295–315 (MISYPLAYAVLWAIPTIVMII) traverse the membrane as a helical segment. The Extracellular portion of the chain corresponds to 316–321 (QVARGG). Residues 322–342 (EGVSIHVEGLAKMLLVFNGFV) traverse the membrane as a helical segment. Residues 343-401 (DAHVYGFNERTAMGWRQRIRPAAQEDDEEAAGTSGGVHEVVSRPEPTLKNPNVWQQNMV) lie on the Cytoplasmic side of the membrane. The segment at 362 to 401 (RPAAQEDDEEAAGTSGGVHEVVSRPEPTLKNPNVWQQNMV) is disordered. Over residues 391–401 (KNPNVWQQNMV) the composition is skewed to polar residues.

Belongs to the G-protein coupled receptor 1 family. Interacts with ascaroside receptor GPR2; may form a functional heterodimer. Interacts with guanine nucleotide-binding protein alpha GPA2; to activate adenylate cyclase and positively regulate nematode trap formation.

The protein localises to the cell membrane. In terms of biological role, g protein-coupled receptor that senses nematode ascaroside pheromones and signals via adenylate cyclase to positively regulate trap formation for nematode capture. The chain is Ascaroside receptor GPR3 from Arthrobotrys oligospora (strain ATCC 24927 / CBS 115.81 / DSM 1491) (Nematode-trapping fungus).